The following is a 136-amino-acid chain: Small ribosomal subunit protein uS19 (136 aa).

Residues 114–136 (RSRVSHGSAGVGATRSSKFVPLK) are disordered.

The protein belongs to the universal ribosomal protein uS19 family.

In terms of biological role, protein S19 forms a complex with S13 that binds strongly to the 16S ribosomal RNA. This Methanosarcina acetivorans (strain ATCC 35395 / DSM 2834 / JCM 12185 / C2A) protein is Small ribosomal subunit protein uS19.